We begin with the raw amino-acid sequence, 189 residues long: Putative ankyrin repeat protein TV1425 (189 aa).

ANK repeat units follow at residues 31-60 (YNRT…KLED), 64-93 (EGST…NVNT), 97-126 (SGKT…NVND), and 130-159 (EGET…DISA).

This chain is Putative ankyrin repeat protein TV1425, found in Thermoplasma volcanium (strain ATCC 51530 / DSM 4299 / JCM 9571 / NBRC 15438 / GSS1).